The chain runs to 273 residues: MHDAQIRVAIAGAGGRMGRQLIQAALQMEGVALGAALEREGSSLVGSDAGELAGAGKAGVAVQSSLAAVKDDFDVLIDFTRPEGTLNHLAFCREHGKGMVIGTTGFDDAGKQAIRDAAQDIAIVFAANFSVGVNVLLKLLEKAAKVMGDYTDIEIIEAHHRHKVDAPSGTALAMGEAIAGALNKDLKDCAVYSREGYTGERVPGTIGFATVRAGDIVGEHTAMFADIGERIEITHKASSRMTFANGAVRSALWLKGKKNGLFDMRDVLDLNSL.

NAD(+) contacts are provided by residues 12–17 (GAGGRM) and glutamate 38. Arginine 39 lines the NADP(+) pocket. NAD(+)-binding positions include 102 to 104 (GTT) and 126 to 129 (AANF). Histidine 159 functions as the Proton donor/acceptor in the catalytic mechanism. Residue histidine 160 participates in (S)-2,3,4,5-tetrahydrodipicolinate binding. The active-site Proton donor is the lysine 163. 169–170 (GT) contacts (S)-2,3,4,5-tetrahydrodipicolinate.

The protein belongs to the DapB family. Homotetramer.

It is found in the cytoplasm. It carries out the reaction (S)-2,3,4,5-tetrahydrodipicolinate + NAD(+) + H2O = (2S,4S)-4-hydroxy-2,3,4,5-tetrahydrodipicolinate + NADH + H(+). The enzyme catalyses (S)-2,3,4,5-tetrahydrodipicolinate + NADP(+) + H2O = (2S,4S)-4-hydroxy-2,3,4,5-tetrahydrodipicolinate + NADPH + H(+). It functions in the pathway amino-acid biosynthesis; L-lysine biosynthesis via DAP pathway; (S)-tetrahydrodipicolinate from L-aspartate: step 4/4. Functionally, catalyzes the conversion of 4-hydroxy-tetrahydrodipicolinate (HTPA) to tetrahydrodipicolinate. This is 4-hydroxy-tetrahydrodipicolinate reductase from Klebsiella pneumoniae subsp. pneumoniae (strain ATCC 700721 / MGH 78578).